We begin with the raw amino-acid sequence, 581 residues long: Dehydrocurvularin exporter (581 aa).

Positions Met-1–Asn-10 are enriched in polar residues. The disordered stretch occupies residues Met-1–Gly-47. Asn-11 is a glycosylation site (N-linked (GlcNAc...) asparagine). The span at Ser-24 to Asp-39 shows a compositional bias: basic and acidic residues. The next 14 membrane-spanning stretches (helical) occupy residues Leu-61–Ala-81, Asp-96–Gly-116, Trp-126–Pro-146, Gly-159–Pro-179, Leu-184–Gly-204, Trp-215–Leu-235, Ile-251–Thr-271, Val-288–Leu-308, Ile-330–Phe-350, Val-363–Ile-383, Tyr-392–Val-412, Val-424–Phe-444, Ile-456–Phe-476, and Val-527–Phe-547. The interval Asp-552–Val-581 is disordered. Residues Asp-565–Val-581 are compositionally biased toward basic and acidic residues.

It belongs to the major facilitator superfamily. TCR/Tet family.

The protein localises to the cell membrane. Efflux pump that is probably involved in the export of dehydrocurvularin. The chain is Dehydrocurvularin exporter from Alternaria cinerariae.